The sequence spans 592 residues: UvrABC system protein C (592 aa).

In terms of domain architecture, GIY-YIG spans 15–92 (ALPGCYLMKD…IQKHQPYFNI (78 aa)). The UVR domain occupies 197-232 (DNVKKDLTEKMATAAQEMQFERAAELRDQLRYIEAT).

It belongs to the UvrC family. Interacts with UvrB in an incision complex.

The protein localises to the cytoplasm. In terms of biological role, the UvrABC repair system catalyzes the recognition and processing of DNA lesions. UvrC both incises the 5' and 3' sides of the lesion. The N-terminal half is responsible for the 3' incision and the C-terminal half is responsible for the 5' incision. This chain is UvrABC system protein C, found in Latilactobacillus sakei subsp. sakei (strain 23K) (Lactobacillus sakei subsp. sakei).